The sequence spans 443 residues: Glutamyl-tRNA reductase (443 aa).

Substrate-binding positions include 55-58, Ser113, 118-120, and Gln124; these read TCNR and EPQ. The Nucleophile role is filled by Cys56. 193 to 198 contributes to the NADP(+) binding site; it reads GAGEMI.

The protein belongs to the glutamyl-tRNA reductase family. Homodimer.

The catalysed reaction is (S)-4-amino-5-oxopentanoate + tRNA(Glu) + NADP(+) = L-glutamyl-tRNA(Glu) + NADPH + H(+). It participates in porphyrin-containing compound metabolism; protoporphyrin-IX biosynthesis; 5-aminolevulinate from L-glutamyl-tRNA(Glu): step 1/2. The protein operates within porphyrin-containing compound metabolism; chlorophyll biosynthesis. Its function is as follows. Catalyzes the NADPH-dependent reduction of glutamyl-tRNA(Glu) to glutamate 1-semialdehyde (GSA). In Methylibium petroleiphilum (strain ATCC BAA-1232 / LMG 22953 / PM1), this protein is Glutamyl-tRNA reductase.